We begin with the raw amino-acid sequence, 81 residues long: Small ribosomal subunit protein bS18 (81 aa).

It belongs to the bacterial ribosomal protein bS18 family. In terms of assembly, part of the 30S ribosomal subunit. Forms a tight heterodimer with protein bS6.

In terms of biological role, binds as a heterodimer with protein bS6 to the central domain of the 16S rRNA, where it helps stabilize the platform of the 30S subunit. The chain is Small ribosomal subunit protein bS18 from Syntrophobacter fumaroxidans (strain DSM 10017 / MPOB).